The sequence spans 65 residues: Small, acid-soluble spore protein C3 (65 aa).

Belongs to the alpha/beta-type SASP family.

In terms of biological role, SASP are bound to spore DNA. They are double-stranded DNA-binding proteins that cause DNA to change to an a-like conformation. They protect the DNA backbone from chemical and enzymatic cleavage and are thus involved in dormant spore's high resistance to UV light. This Priestia megaterium (Bacillus megaterium) protein is Small, acid-soluble spore protein C3 (SASP-C3).